Reading from the N-terminus, the 639-residue chain is RNA polymerase II elongation factor ELL2 (639 aa).

4 disordered regions span residues 175–203 (DTVP…SVSQ), 291–326 (LNPS…SDFI), 378–416 (PSTH…SFSQ), and 439–513 (PSSA…EGCT). Residues 291–317 (LNPSQNASTSRSESPLCSSKDAASSPQ) are compositionally biased toward polar residues. A compositionally biased stretch (low complexity) spans 378–401 (PSTHLPVSNPPQTVNSNSNSPSTP). A compositionally biased stretch (basic residues) spans 457 to 469 (SHKKSKKKSKKHK). The span at 470–479 (EKDQIKKLDI) shows a compositional bias: basic and acidic residues. Acidic residues predominate over residues 480 to 490 (ETMEEKEEDLQ). Residues Ser-501 and Ser-579 each carry the phosphoserine modification. Positions 525–635 (PDYLIKYIAI…LIGEFDQQQA (111 aa)) constitute an OCEL domain.

The protein belongs to the ELL/occludin family. In terms of assembly, component of the super elongation complex (SEC), at least composed of EAF1, EAF2, CDK9, MLLT3/AF9, AFF (AFF1 or AFF4), the P-TEFb complex and ELL (ELL, ELL2 or ELL3). Component of the little elongation complex (LEC), at least composed of ELL (ELL, ELL2 or ELL3), ZC3H8, ICE1 and ICE2. Interacts with AFF4; the interaction is direct and leads to stabilize ELL2 and prevent ELL2 ubiquitination. Interacts with EAF1 and EAF2. Ubiquitinated by SIAH1, leading to its degradation by the proteasome. Interaction with AFF4 stabilizes ELL2 and prevents ELL2 ubiquitination.

Its subcellular location is the nucleus. Elongation factor component of the super elongation complex (SEC), a complex required to increase the catalytic rate of RNA polymerase II transcription by suppressing transient pausing by the polymerase at multiple sites along the DNA. Component of the little elongation complex (LEC), a complex required to regulate small nuclear RNA (snRNA) gene transcription by RNA polymerase II and III. Plays a role in immunoglobulin secretion in plasma cells: directs efficient alternative mRNA processing, influencing both proximal poly(A) site choice and exon skipping, as well as immunoglobulin heavy chain (IgH) alternative processing. Probably acts by regulating histone modifications accompanying transition from membrane-specific to secretory IgH mRNA expression. This is RNA polymerase II elongation factor ELL2 (Ell2) from Mus musculus (Mouse).